Here is a 186-residue protein sequence, read N- to C-terminus: Ferritin heavy chain (186 aa).

Residues 16–165 (QNYHQDSEAA…DHVTNLRKMG (150 aa)) enclose the Ferritin-like diiron domain. Fe cation is bound by residues Glu33, Glu68, His71, Glu113, and Gln147. At Ser184 the chain carries Phosphoserine.

The protein belongs to the ferritin family. Oligomer of 24 subunits. There are two types of subunits: L (light) chain and H (heavy) chain. The major chain can be light or heavy, depending on the species and tissue type. The functional molecule forms a roughly spherical shell with a diameter of 12 nm and contains a central cavity into which the insoluble mineral iron core is deposited. Interacts with NCOA4; NCOA4 promotes targeting of the iron-binding ferritin complex to autolysosomes following starvation or iron depletion.

It is found in the cytoplasm. It localises to the lysosome. The protein localises to the cytoplasmic vesicle. The protein resides in the autophagosome. The enzyme catalyses 4 Fe(2+) + O2 + 4 H(+) = 4 Fe(3+) + 2 H2O. In terms of biological role, stores iron in a soluble, non-toxic, readily available form. Important for iron homeostasis. Has ferroxidase activity. Iron is taken up in the ferrous form and deposited as ferric hydroxides after oxidation. Also plays a role in delivery of iron to cells. Mediates iron uptake in capsule cells of the developing kidney. Delivery to lysosomes is mediated by the cargo receptor NCOA4 for autophagic degradation and release of iron. This is Ferritin heavy chain (FTH1) from Cricetulus griseus (Chinese hamster).